We begin with the raw amino-acid sequence, 260 residues long: Imidazole glycerol phosphate synthase subunit HisF (260 aa).

Catalysis depends on residues Asp11 and Asp130.

The protein belongs to the HisA/HisF family. Heterodimer of HisH and HisF.

It localises to the cytoplasm. It carries out the reaction 5-[(5-phospho-1-deoxy-D-ribulos-1-ylimino)methylamino]-1-(5-phospho-beta-D-ribosyl)imidazole-4-carboxamide + L-glutamine = D-erythro-1-(imidazol-4-yl)glycerol 3-phosphate + 5-amino-1-(5-phospho-beta-D-ribosyl)imidazole-4-carboxamide + L-glutamate + H(+). It participates in amino-acid biosynthesis; L-histidine biosynthesis; L-histidine from 5-phospho-alpha-D-ribose 1-diphosphate: step 5/9. IGPS catalyzes the conversion of PRFAR and glutamine to IGP, AICAR and glutamate. The HisF subunit catalyzes the cyclization activity that produces IGP and AICAR from PRFAR using the ammonia provided by the HisH subunit. This chain is Imidazole glycerol phosphate synthase subunit HisF, found in Caulobacter sp. (strain K31).